The primary structure comprises 383 residues: Acetylornithine deacetylase (383 aa).

His-80 lines the Zn(2+) pocket. Asp-82 is a catalytic residue. Asp-112 lines the Zn(2+) pocket. Residue Glu-144 is part of the active site. Glu-145, Glu-169, and His-355 together coordinate Zn(2+).

The protein belongs to the peptidase M20A family. ArgE subfamily. In terms of assembly, homodimer. The cofactor is Zn(2+). Co(2+) is required as a cofactor. It depends on glutathione as a cofactor.

Its subcellular location is the cytoplasm. It carries out the reaction N(2)-acetyl-L-ornithine + H2O = L-ornithine + acetate. It participates in amino-acid biosynthesis; L-arginine biosynthesis; L-ornithine from N(2)-acetyl-L-ornithine (linear): step 1/1. Functionally, catalyzes the hydrolysis of the amide bond of N(2)-acetylated L-amino acids. Cleaves the acetyl group from N-acetyl-L-ornithine to form L-ornithine, an intermediate in L-arginine biosynthesis pathway, and a branchpoint in the synthesis of polyamines. This is Acetylornithine deacetylase from Salmonella paratyphi A (strain ATCC 9150 / SARB42).